The chain runs to 809 residues: Glycerol-3-phosphate acyltransferase (809 aa).

The HXXXXD motif motif lies at 306 to 311; that stretch reads HRSHMD.

Belongs to the GPAT/DAPAT family.

The protein localises to the cell inner membrane. The enzyme catalyses sn-glycerol 3-phosphate + an acyl-CoA = a 1-acyl-sn-glycero-3-phosphate + CoA. It participates in phospholipid metabolism; CDP-diacylglycerol biosynthesis; CDP-diacylglycerol from sn-glycerol 3-phosphate: step 1/3. This is Glycerol-3-phosphate acyltransferase from Vibrio vulnificus (strain CMCP6).